The sequence spans 262 residues: ClpXP adapter protein SpxH (262 aa).

This sequence belongs to the SpxH family. Interacts with Spx.

The protein localises to the cytoplasm. Adapter protein required for efficient degradation of Spx by ClpXP under non-stress conditions. Interaction with Spx stabilizes Spx and exposes the C-terminus of Spx for recognition and proteolysis by ClpXP. This is ClpXP adapter protein SpxH from Staphylococcus saprophyticus subsp. saprophyticus (strain ATCC 15305 / DSM 20229 / NCIMB 8711 / NCTC 7292 / S-41).